A 415-amino-acid polypeptide reads, in one-letter code: Protein PIN-LIKES 4 (415 aa).

Topologically, residues 1–13 (MKLLELFIASSKP) are lumenal. The helical transmembrane segment at 14-34 (VVETLLITSVGFYLALDTVNL) threads the bilayer. At 35 to 44 (LGHDARKHLN) the chain is on the cytoplasmic side. The chain crosses the membrane as a helical span at residues 45–61 (NIVFYVFSPSLIGSRLA). Residues 62–75 (DSVTYESLVKMWFM) are Lumenal-facing. The chain crosses the membrane as a helical span at residues 76–96 (PVNVLLTFMIGSLLGWIVIVI). The Cytoplasmic segment spans residues 97 to 106 (TKPPSQLRGL). The chain crosses the membrane as a helical span at residues 107–127 (IISCCASGNLGTMPLIIIPAI). At 128–143 (CKEKGGPFGDSESCEK) the chain is on the lumenal side. A helical transmembrane segment spans residues 144 to 161 (YGMGYVTLSMTAFFISVY). The Cytoplasmic portion of the chain corresponds to 162–244 (KHDTNWYVSG…RVVSLSKKVN (83 aa)). A helical transmembrane segment spans residues 245–265 (LGSIFAPATIAAIIALVIGLI). At 266–285 (TPLRNLIIGTVAPFRVIQDS) the chain is on the lumenal side. A helical transmembrane segment spans residues 286–306 (LTLLGDGAIPAMTLILGGNLL). Residues 307-322 (KGMRRSEVRSSEMKNS) lie on the Cytoplasmic side of the membrane. A helical membrane pass occupies residues 323–343 (CIIGVLVARYILLPVSGVLLV). The Lumenal segment spans residues 344–355 (RGAYKLDLVTSE). Residues 356-376 (PLYQFVLLLQYAVPPAMNLGT) form a helical membrane-spanning segment. Residues 377 to 389 (KTQLFGAGESECS) are Cytoplasmic-facing. Residues 390-410 (VIMLWTYSLAAVSLTVWPTFF) traverse the membrane as a helical segment. Topologically, residues 411–415 (MWLVT) are lumenal.

Belongs to the auxin efflux carrier (TC 2.A.69.2) family. Expressed in seedlings, rosette and cauline leaves, stems, flowers and siliques.

The protein localises to the endoplasmic reticulum membrane. Involved in cellular auxin homeostasis by regulating auxin metabolism. Regulates intracellular auxin accumulation at the endoplasmic reticulum and thus auxin availability for nuclear auxin signaling. This is Protein PIN-LIKES 4 from Arabidopsis thaliana (Mouse-ear cress).